Here is a 132-residue protein sequence, read N- to C-terminus: Small ribosomal subunit protein uS8c (132 aa).

This sequence belongs to the universal ribosomal protein uS8 family. Part of the 30S ribosomal subunit.

It is found in the plastid. Its subcellular location is the chloroplast. In terms of biological role, one of the primary rRNA binding proteins, it binds directly to 16S rRNA central domain where it helps coordinate assembly of the platform of the 30S subunit. This Angiopteris evecta (Mule's foot fern) protein is Small ribosomal subunit protein uS8c (rps8).